The primary structure comprises 258 residues: Terpene cyclase macJ (258 aa).

7 consecutive transmembrane segments (helical) span residues 29–49 (VPDG…ILMA), 58–78 (YAMP…YGFV), 83–103 (LLNQ…FYAI), 124–144 (IIVV…ATFI), 151–171 (VVFM…IAQL), 181–201 (SWGI…CFFW), and 220–240 (FLLL…VYVQ).

The protein belongs to the paxB family.

It is found in the membrane. It functions in the pathway secondary metabolite biosynthesis; terpenoid biosynthesis. Functionally, terpene cyclase; part of the gene cluster that mediates the biosynthesis of macrophorins, isoprenoid epoxycyclohexenones containing cyclized drimane moieties. The first step of the pathway is the synthesis of 6-methylsalicylic acid (6-MSA) by the polyketide synthase macA. 6-MSA is then converted to m-cresol by the decarboxylase macB. The cytochrome P450 monooxygenase macC then catalyzes the oxidation of m-cresol to toluquinol. Epoxidation of toluquinol is then performed by the short chain dehydrogenase macD, with the help of macE, and a further prenylation by macG leads to 7-deacetoxyyanuthone A. The next step is the hydroxylation of C-22 of 7-deacetoxyyanuthone A by the cytochrome P450 monooxygenase macH to yield 22-deacetylyanuthone A. O-Mevalon transferase macI then attaches mevalon to the hydroxyl group of 22-deacetylyanuthone A to produce yanuthone E. The terpene cyclase macJ catalyzes the cyclization of 22-deacetylyanuthone A to macrophorin A. MacJ is also able to catalyze cyclization of yanuthone E and 7-deacetoxyyanuthone A to their corresponding macrophorins. The macJ products can be further modified by macH and macJ, as well as by the FAD-dependent monooxygenase macF, to produce additional macrophorins, including 4'-oxomacrophorin A, 4'-oxomacrophorin D and 4'-oxomacrophorin E. The protein is Terpene cyclase macJ of Penicillium terrestre.